The following is a 314-amino-acid chain: MMEIRTPKTGKAKRVLESRAPKLVETGKKTLILHGTKTSATLSSVMTELYRLKKGGAIRYSRRNENIRPFESGGETSLEFFSQKTDCSIFVYGSHTKKRPDNLVLGRMYDHQVYDLIEVGIENFKSLRAFSYDKKFAPHEGTKPFICFIGEGFENVSELKHLKEVLTDLFRGEVVDNLNLTGLDRAYVCSAISPTKVFLTHCALKLKKSGSIVPRMELVEVGPSMDLVIRRNRLPNDSLMKEAMRTSKDKPKKKEKNVDQDAVLGKTGKIYMPDQKLKEMKLFDKSKGSKRERKDAKLKHKEETVAKKMKVSSE.

Residues 28-238 (KKTLILHGTK…IRRNRLPNDS (211 aa)) enclose the Brix domain. Positions 238–314 (SLMKEAMRTS…VAKKMKVSSE (77 aa)) are disordered. Basic and acidic residues-rich tracts occupy residues 239-249 (LMKEAMRTSKD) and 275-314 (QKLKEMKLFDKSKGSKRERKDAKLKHKEETVAKKMKVSSE).

This sequence belongs to the RPF2 family.

The protein resides in the nucleus. It is found in the nucleolus. This Arabidopsis thaliana (Mouse-ear cress) protein is Ribosome production factor 2 homolog.